A 188-amino-acid chain; its full sequence is Protein GrpE (188 aa).

The disordered stretch occupies residues 1 to 30 (MTKKTSHHKAEQKEKRAGEESGRESEVLDH). Residues 8–30 (HKAEQKEKRAGEESGRESEVLDH) are compositionally biased toward basic and acidic residues.

It belongs to the GrpE family. In terms of assembly, homodimer.

The protein resides in the cytoplasm. Functionally, participates actively in the response to hyperosmotic and heat shock by preventing the aggregation of stress-denatured proteins, in association with DnaK and GrpE. It is the nucleotide exchange factor for DnaK and may function as a thermosensor. Unfolded proteins bind initially to DnaJ; upon interaction with the DnaJ-bound protein, DnaK hydrolyzes its bound ATP, resulting in the formation of a stable complex. GrpE releases ADP from DnaK; ATP binding to DnaK triggers the release of the substrate protein, thus completing the reaction cycle. Several rounds of ATP-dependent interactions between DnaJ, DnaK and GrpE are required for fully efficient folding. The sequence is that of Protein GrpE from Chlorobium phaeobacteroides (strain BS1).